We begin with the raw amino-acid sequence, 485 residues long: NADH-quinone oxidoreductase subunit N (485 aa).

14 helical membrane passes run 8-28 (LIALLPLLIVGLTVVVVMLSI), 35-55 (FLNATLSVIGLNAALVSLWFV), 71-91 (GFAMLYTGLVLLASLATCTFA), 105-125 (FYLLVLIASLGGILLTNANHL), 127-147 (ALFLGIELISLPLFGLIGYAF), 159-179 (YTILSAAASSFLLFGMALVYA), 203-223 (LLAGFGLMIVGLGFKLSLVPF), 235-255 (PAPVSTFLATASKIAIFGVVM), 271-291 (VVLGIIAFASIIFGNLMALSQ), 297-317 (LLGYSSISHLGYLLVALIALQ), 326-346 (VGVYLAGYLFSSLGAFGVVSL), 373-393 (AAVMTVMMLSLAGIPMTLGFI), 408-430 (WWLVAAVVVGSAIGLYYYLRVAV), and 455-475 (IVVLISALLVLVLGVWPQPLI).

Belongs to the complex I subunit 2 family. NDH-1 is composed of 13 different subunits. Subunits NuoA, H, J, K, L, M, N constitute the membrane sector of the complex.

Its subcellular location is the cell inner membrane. The enzyme catalyses a quinone + NADH + 5 H(+)(in) = a quinol + NAD(+) + 4 H(+)(out). Functionally, NDH-1 shuttles electrons from NADH, via FMN and iron-sulfur (Fe-S) centers, to quinones in the respiratory chain. The immediate electron acceptor for the enzyme in this species is believed to be ubiquinone. Couples the redox reaction to proton translocation (for every two electrons transferred, four hydrogen ions are translocated across the cytoplasmic membrane), and thus conserves the redox energy in a proton gradient. The polypeptide is NADH-quinone oxidoreductase subunit N (Salmonella dublin (strain CT_02021853)).